A 974-amino-acid chain; its full sequence is UvrABC system protein A (974 aa).

34–41 is an ATP binding site; that stretch reads GLSGSGKS. 2 ABC transporter domains span residues 331–610 and 630–959; these read WARS…TNSL and ISKT…QFLK. Residue 663–670 participates in ATP binding; it reads GVSGGGKS. A C4-type zinc finger spans residues 762–788; sequence CEACQGDGVIKIEMHFLPDVYVTCDVC.

This sequence belongs to the ABC transporter superfamily. UvrA family. Forms a heterotetramer with UvrB during the search for lesions.

It localises to the cytoplasm. In terms of biological role, the UvrABC repair system catalyzes the recognition and processing of DNA lesions. UvrA is an ATPase and a DNA-binding protein. A damage recognition complex composed of 2 UvrA and 2 UvrB subunits scans DNA for abnormalities. When the presence of a lesion has been verified by UvrB, the UvrA molecules dissociate. This Brucella melitensis biotype 1 (strain ATCC 23456 / CCUG 17765 / NCTC 10094 / 16M) protein is UvrABC system protein A.